The chain runs to 334 residues: Protein-methionine-sulfoxide reductase catalytic subunit MsrP (334 aa).

The tat-type signal signal peptide spans 1–44 (MKKIRPLTEADVTAESAFFMQRRQVLKALGISAAALSLPSTAQA). Residues asparagine 88, 91-92 (YE), cysteine 146, threonine 181, asparagine 233, arginine 238, and 249-251 (GIK) each bind Mo-molybdopterin.

It belongs to the MsrP family. Heterodimer of a catalytic subunit (MsrP) and a heme-binding subunit (MsrQ). Mo-molybdopterin serves as cofactor. In terms of processing, predicted to be exported by the Tat system. The position of the signal peptide cleavage has not been experimentally proven.

The protein localises to the periplasm. The enzyme catalyses L-methionyl-[protein] + a quinone + H2O = L-methionyl-(S)-S-oxide-[protein] + a quinol. It catalyses the reaction L-methionyl-[protein] + a quinone + H2O = L-methionyl-(R)-S-oxide-[protein] + a quinol. Its function is as follows. Part of the MsrPQ system that repairs oxidized periplasmic proteins containing methionine sulfoxide residues (Met-O), using respiratory chain electrons. Thus protects these proteins from oxidative-stress damage caused by reactive species of oxygen and chlorine generated by the host defense mechanisms. MsrPQ is essential for the maintenance of envelope integrity under bleach stress, rescuing a wide series of structurally unrelated periplasmic proteins from methionine oxidation, including the primary periplasmic chaperone SurA and the lipoprotein Pal. The catalytic subunit MsrP is non-stereospecific, being able to reduce both (R-) and (S-) diastereoisomers of methionine sulfoxide. The protein is Protein-methionine-sulfoxide reductase catalytic subunit MsrP of Salmonella agona (strain SL483).